We begin with the raw amino-acid sequence, 81 residues long: Large ribosomal subunit protein eL31 (81 aa).

The protein belongs to the eukaryotic ribosomal protein eL31 family.

This Methanothermobacter thermautotrophicus (strain ATCC 29096 / DSM 1053 / JCM 10044 / NBRC 100330 / Delta H) (Methanobacterium thermoautotrophicum) protein is Large ribosomal subunit protein eL31 (rpl31e).